The sequence spans 732 residues: Translation initiation factor IF-2 (732 aa).

The interval 40–147 is disordered; that stretch reads PEVVEKLDHT…QQEQPMKKEK (108 aa). The span at 42-67 shows a compositional bias: basic and acidic residues; sequence VVEKLDHTYNKKNERPQASAPKEKQK. Over residues 90 to 103 the composition is skewed to basic residues; the sequence is KVPKKKSANKKKEG. Residues 104-117 show a composition bias toward basic and acidic residues; sequence KKHDLQLQQQEKKI. A compositionally biased stretch (basic residues) spans 118–129; the sequence is FHQQKKKIKGKA. The region spanning 233-402 is the tr-type G domain; it reads ERPPVVTIMG…LLVSEMEELK (170 aa). Residues 242–249 are G1; that stretch reads GHVDHGKT. 242–249 contributes to the GTP binding site; it reads GHVDHGKT. Positions 267 to 271 are G2; it reads GITQH. The segment at 288–291 is G3; that stretch reads DTPG. GTP contacts are provided by residues 288–292 and 342–345; these read DTPGH and NKMD. Positions 342-345 are G4; it reads NKMD. Residues 378 to 380 are G5; the sequence is SAK.

This sequence belongs to the TRAFAC class translation factor GTPase superfamily. Classic translation factor GTPase family. IF-2 subfamily.

Its subcellular location is the cytoplasm. Functionally, one of the essential components for the initiation of protein synthesis. Protects formylmethionyl-tRNA from spontaneous hydrolysis and promotes its binding to the 30S ribosomal subunits. Also involved in the hydrolysis of GTP during the formation of the 70S ribosomal complex. The polypeptide is Translation initiation factor IF-2 (Geobacillus sp. (strain WCH70)).